A 906-amino-acid polypeptide reads, in one-letter code: Catenin alpha-1 (906 aa).

Threonine 2 bears the N-acetylthreonine mark. The involved in homodimerization stretch occupies residues threonine 2–cysteine 228. Lysine 57 is covalently cross-linked (Glycyl lysine isopeptide (Lys-Gly) (interchain with G-Cter in SUMO2)). Residues valine 97–tyrosine 148 form an interaction with JUP and CTNNB1 region. Residues serine 264, serine 268, serine 295, and serine 297 each carry the phosphoserine modification. The segment at threonine 325–phenylalanine 394 is interaction with alpha-actinin. Threonine 634 carries the phosphothreonine modification. Phosphoserine is present on serine 641. Threonine 645 carries the phosphothreonine modification. Phosphoserine occurs at positions 652 and 655. Threonine 658 carries the phosphothreonine modification. Residue lysine 797 forms a Glycyl lysine isopeptide (Lys-Gly) (interchain with G-Cter in SUMO2) linkage. A Phosphoserine modification is found at serine 851. The segment covering proline 864 to threonine 880 has biased composition (basic and acidic residues). The segment at proline 864–valine 894 is disordered. Basic residues predominate over residues lysine 881–valine 891.

It belongs to the vinculin/alpha-catenin family. In terms of assembly, monomer and homodimer; the monomer preferentially binds to CTNNB1 and the homodimer to actin. Component of an cadherin:catenin adhesion complex composed of at least of CDH26, beta-catenin/CTNNB1, alpha-catenin/CTNNA1 and p120 catenin/CTNND1. Possible component of an E-cadherin/ catenin adhesion complex together with E-cadherin/CDH1 and beta-catenin/CTNNB1 or gamma-catenin/JUP; the complex is located to adherens junctions. The stable association of CTNNA1 is controversial as CTNNA1 was shown not to bind to F-actin when assembled in the complex. Alternatively, the CTNNA1-containing complex may be linked to F-actin by other proteins such as LIMA1. Binds AFDN and F-actin. Interacts with ARHGAP21. Interacts with AJUBA. Interacts with LIMA1. Interacts with vinculin/VCL. Interacts with TJP2/ZO2 (via N-terminus). Interacts with TJP1/ZO1 (via N-terminus). Post-translationally, sumoylated. In terms of processing, phosphorylation seems to contribute to the strength of cell-cell adhesion rather than to the basic capacity for cell-cell adhesion.

The protein resides in the cytoplasm. The protein localises to the cytoskeleton. Its subcellular location is the cell junction. It is found in the adherens junction. It localises to the cell membrane. The protein resides in the nucleus. Associates with the cytoplasmic domain of a variety of cadherins. The association of catenins to cadherins produces a complex which is linked to the actin filament network, and which seems to be of primary importance for cadherins cell-adhesion properties. Can associate with both E- and N-cadherins. Originally believed to be a stable component of E-cadherin/catenin adhesion complexes and to mediate the linkage of cadherins to the actin cytoskeleton at adherens junctions. In contrast, cortical actin was found to be much more dynamic than E-cadherin/catenin complexes and CTNNA1 was shown not to bind to F-actin when assembled in the complex suggesting a different linkage between actin and adherens junctions components. The homodimeric form may regulate actin filament assembly and inhibit actin branching by competing with the Arp2/3 complex for binding to actin filaments. Involved in the regulation of WWTR1/TAZ, YAP1 and TGFB1-dependent SMAD2 and SMAD3 nuclear accumulation. May play a crucial role in cell differentiation. The sequence is that of Catenin alpha-1 from Bos taurus (Bovine).